A 215-amino-acid polypeptide reads, in one-letter code: MGKVYDWFEERLEIQAIADDITSKYVPPHVNIFYCLGGITLTCFLVQVATGFAMTFYYRPTVTEAFSSVQYIMTEVNFGWLVRSVHRWSASMMVLMMILHVFRVYLTGGFKNPRELTWITGVILAVLTVSFGVTGYSLPWDQIGYWAVKIVTGVPEAIPVIGSPLVELLRGSVSVGQSTLTRFYSLHTFVLPLLTAVFMLMHFLMIRKQGISGPL.

The helical transmembrane segment at 32–52 threads the bilayer; sequence IFYCLGGITLTCFLVQVATGF. Residue cysteine 35 coordinates heme c. Positions 86 and 100 each coordinate heme b. 3 helical membrane passes run 90–110, 116–136, and 186–206; these read ASMM…TGGF, LTWI…VTGY, and LHTF…FLMI. Heme b is bound by residues histidine 187 and histidine 202.

This sequence belongs to the cytochrome b family. PetB subfamily. As to quaternary structure, the 4 large subunits of the cytochrome b6-f complex are cytochrome b6, subunit IV (17 kDa polypeptide, PetD), cytochrome f and the Rieske protein, while the 4 small subunits are PetG, PetL, PetM and PetN. The complex functions as a dimer. Heme b is required as a cofactor. Requires heme c as cofactor.

Its subcellular location is the plastid. It is found in the chloroplast thylakoid membrane. Functionally, component of the cytochrome b6-f complex, which mediates electron transfer between photosystem II (PSII) and photosystem I (PSI), cyclic electron flow around PSI, and state transitions. In Psilotum nudum (Whisk fern), this protein is Cytochrome b6.